We begin with the raw amino-acid sequence, 88 residues long: UPF0250 protein Ssed_3490 (88 aa).

The protein belongs to the UPF0250 family.

In Shewanella sediminis (strain HAW-EB3), this protein is UPF0250 protein Ssed_3490.